A 533-amino-acid chain; its full sequence is Peptide chain release factor 3 (533 aa).

One can recognise a tr-type G domain in the interval 9–284 (ARRRTFAIIS…ALCELSPPPL (276 aa)). GTP-binding positions include 18-25 (SHPDAGKT), 95-99 (DTPGH), and 149-152 (NKLD).

This sequence belongs to the TRAFAC class translation factor GTPase superfamily. Classic translation factor GTPase family. PrfC subfamily.

It localises to the cytoplasm. Increases the formation of ribosomal termination complexes and stimulates activities of RF-1 and RF-2. It binds guanine nucleotides and has strong preference for UGA stop codons. It may interact directly with the ribosome. The stimulation of RF-1 and RF-2 is significantly reduced by GTP and GDP, but not by GMP. The sequence is that of Peptide chain release factor 3 from Cupriavidus taiwanensis (strain DSM 17343 / BCRC 17206 / CCUG 44338 / CIP 107171 / LMG 19424 / R1) (Ralstonia taiwanensis (strain LMG 19424)).